The primary structure comprises 187 residues: Ribosome-recycling factor (187 aa).

This sequence belongs to the RRF family.

It is found in the cytoplasm. Its function is as follows. Responsible for the release of ribosomes from messenger RNA at the termination of protein biosynthesis. May increase the efficiency of translation by recycling ribosomes from one round of translation to another. The polypeptide is Ribosome-recycling factor (Anaeromyxobacter sp. (strain Fw109-5)).